The sequence spans 375 residues: Trichodiene synthase (375 aa).

This sequence belongs to the trichodiene synthase family.

It carries out the reaction (2E,6E)-farnesyl diphosphate = trichodiene + diphosphate. The protein operates within sesquiterpene biosynthesis; trichothecene biosynthesis. Functionally, TS is a member of the terpene cyclase group of enzymes. It catalyzes the isomerization and cyclization of farnesyl pyro-phosphate to form trichodiene, the first cyclic intermediate in the biosynthetic pathway for trichothecenes. It serves to branch trichothecene biosynthesis from the isoprenoid pathway. The protein is Trichodiene synthase (TRI5) of Fusarium cerealis (Fusarium crookwellense).